Consider the following 320-residue polypeptide: Cell division protein FtsQ (320 aa).

A disordered region spans residues Met-1–Lys-24. The Cytoplasmic portion of the chain corresponds to Met-1–Arg-52. A helical transmembrane segment spans residues Ile-53–Ala-73. Residues Gly-74–Gly-320 are Periplasmic-facing. The region spanning Phe-92–Arg-160 is the POTRA domain. Residues Ala-296–Gly-320 are disordered.

It belongs to the FtsQ/DivIB family. FtsQ subfamily.

It localises to the cell inner membrane. Essential cell division protein. The sequence is that of Cell division protein FtsQ from Novosphingobium aromaticivorans (strain ATCC 700278 / DSM 12444 / CCUG 56034 / CIP 105152 / NBRC 16084 / F199).